Reading from the N-terminus, the 251-residue chain is L,D-transpeptidase 1 (251 aa).

A signal peptide spans 1-28 (MRRVVRYLSVVVAITLMLTAESVSIATA). The L,D-TPase catalytic domain occupies 125-250 (LIGVASISAH…VTVGDPIEVV (126 aa)). Substrate contacts are provided by residues Tyr-190 and 203 to 204 (SG). Catalysis depends on His-208, which acts as the Proton donor/acceptor. The active-site Nucleophile is the Cys-226. Asn-228 contacts substrate.

As to quaternary structure, monomer.

The protein localises to the periplasm. Its pathway is cell wall biogenesis; peptidoglycan biosynthesis. Is irreversibly inactivated by the beta-lactams carbapenems via the formation of a covalent adduct resulting from acylation of the catalytic Cys. Functionally, generates 3-&gt;3 cross-links in peptidoglycan, catalyzing the cleavage of the mDap(3)-D-Ala(4) bond of a tetrapeptide donor stem and the formation of a bond between the carbonyl of mDap(3) of the donor stem and the side chain of mDap(3) of the acceptor stem. Is specific for donor substrates containing a stem tetrapeptide since it cannot use pentapeptide stems. In Mycobacterium tuberculosis (strain CDC 1551 / Oshkosh), this protein is L,D-transpeptidase 1 (ldtA).